A 501-amino-acid polypeptide reads, in one-letter code: MSETEFHHGAQAGLELLRSSNSPTSASQSAGMTVTDQAFVTLATNDIYCQGALVLGQSLRRHRLTRKLVVLITPQVSSLLRVILSKVFDEVIEVNLIDSADYIHLAFLKRPELGLTLTKLHCWTLTHYSKCVFLDADTLVLSNVDELFDRGEFSAAPDPGWPDCFNSGVFVFQPSLHTHKLLLQHAMEHGSFDGADQGLLNSFFRNWSTTDIHKHLPFIYNLSSNTMYTYSPAFKQFGSSAKVVHFLGSMKPWNYKYNPQSGSVLEQGSASSSQHQAAFLHLWWTVYQNNVLPLYKSVQAGEARASPGHTLCHSDVGGPCADSASGVGEPCENSTPSAGVPCANSPLGSNQPAQGLPEPTQIVDETLSLPEGRRSEDMIACPETETPAVITCDPLSQPSPQPADFTETETILQPANKVESVSSEETFEPSQELPAEALRDPSLQDALEVDLAVSVSQISIEEKVKELSPEEERRKWEEGRIDYMGKDAFARIQEKLDRFLQ.

UDP contacts are provided by Leu-42, Thr-44, Asn-45, Tyr-48, and Arg-110. UDP-alpha-D-glucose is bound by residues Leu-42, Thr-44, Asn-45, Tyr-48, Arg-110, Lys-119, Asp-135, Ala-136, Asp-137, Asn-166, Ser-167, Asp-193, Asp-196, and Gln-197. Positions 135, 136, and 137 each coordinate UDP. Asp-135 is a Mn(2+) binding site. Asp-137 lines the Mn(2+) pocket. Tyr-228 is a glycosylation site (O-linked (Glc...) tyrosine). UDP is bound by residues His-245, Gly-248, and Lys-251. His-245 serves as a coordination point for Mn(2+). UDP-alpha-D-glucose contacts are provided by Gly-248 and Lys-251. Residues Ser-368, Ser-399, and Ser-459 each carry the phosphoserine modification.

In terms of assembly, homodimer, tightly complexed to glycogen synthase. Requires Mn(2+) as cofactor. Post-translationally, self-glycosylated by the transfer of glucose residues from UDP-glucose to itself, forming an alpha-1,4-glycan of around 10 residues attached to Tyr-228. As to expression, detected in liver (at protein level). Expressed preferentially in liver, heart, and pancreas.

It is found in the cytoplasm. The protein localises to the nucleus. The enzyme catalyses L-tyrosyl-[glycogenin] + UDP-alpha-D-glucose = alpha-D-glucosyl-L-tyrosyl-[glycogenin] + UDP + H(+). It catalyses the reaction [1,4-alpha-D-glucosyl](n)-L-tyrosyl-[glycogenin] + UDP-alpha-D-glucose = [1,4-alpha-D-glucosyl](n+1)-L-tyrosyl-[glycogenin] + UDP + H(+). The protein operates within glycan biosynthesis; glycogen biosynthesis. Its function is as follows. Glycogenin participates in the glycogen biosynthetic process along with glycogen synthase and glycogen branching enzyme. It catalyzes the formation of a short alpha (1,4)-glucosyl chain covalently attached via a glucose 1-O-tyrosyl linkage to internal tyrosine residues and these chains act as primers for the elongation reaction catalyzed by glycogen synthase. The protein is Glycogenin-2 (GYG2) of Homo sapiens (Human).